A 956-amino-acid chain; its full sequence is UvrABC system protein A (956 aa).

33-40 (GLSGSGKS) is a binding site for ATP. The C4-type zinc-finger motif lies at 252–279 (CPYCGFSVGELEPRMFSFNSPFGACPTC). 2 consecutive ABC transporter domains span residues 309–587 (WRPI…KNSI) and 607–936 (GNGL…KYLK). ATP is bound at residue 639-646 (GVSGSGKS). The C4-type zinc-finger motif lies at 738–764 (CEACKGDGIIKIEMHFLPDVYVPCEVC).

It belongs to the ABC transporter superfamily. UvrA family. Forms a heterotetramer with UvrB during the search for lesions.

It localises to the cytoplasm. The UvrABC repair system catalyzes the recognition and processing of DNA lesions. UvrA is an ATPase and a DNA-binding protein. A damage recognition complex composed of 2 UvrA and 2 UvrB subunits scans DNA for abnormalities. When the presence of a lesion has been verified by UvrB, the UvrA molecules dissociate. This is UvrABC system protein A from Listeria innocua serovar 6a (strain ATCC BAA-680 / CLIP 11262).